The chain runs to 1341 residues: WASH complex subunit 2A (1341 aa).

The tract at residues 1-220 is sufficient for interaction with WASHC3, WASHC4 and WASHC5; required for interaction with WASHC1; the sequence is MMNRTTPDQE…VGSDRGSIVD (220 aa). Over residues 202 to 214 the composition is skewed to low complexity; the sequence is GELSSEEGSVGSD. Residues 202–405 are disordered; the sequence is GELSSEEGSV…SSSKPGKKIP (204 aa). Positions 220 to 232 are enriched in acidic residues; the sequence is DTEEEKEEEESDE. The span at 233–244 shows a compositional bias: basic and acidic residues; it reads DFAHHSDNEQNR. Acidic residues-rich tracts occupy residues 250 to 259 and 266 to 276; these read SDEEEDDDGC and EKEEEDIEDIE. The span at 293 to 307 shows a compositional bias: basic and acidic residues; sequence LAARIKGDAVGRVDE. The span at 355-366 shows a compositional bias: gly residues; it reads GSGGGLFSGGKG. Positions 356-600 are sufficient for interaction with CCDC93; sequence SGGGLFSGGK…QTLCLQAQRE (245 aa). The interval 356–742 is required for interaction with CCDC22 and VPS35L; that stretch reads SGGGLFSGGK…KEAQLGVKSV (387 aa). The interval 357-1341 is interaction with VPS35; it reads GGGLFSGGKG…DDPLNAFGGQ (985 aa). 4 short sequence motifs (LFa) span residues 367-378, 411-419, 450-463, and 482-491; these read LFDDEDEESDLF, VFLGDTDVF, LFDD…DDFF, and IFGDEEGDLF. A disordered region spans residues 422–554; that stretch reads ASVPSMKEPQ…EDLFSSQSAS (133 aa). A compositionally biased stretch (acidic residues) spans 451-462; the sequence is FDDDDGDDDDDF. The span at 507–517 shows a compositional bias: basic and acidic residues; that stretch reads DENKARAEKKV. The span at 518 to 536 shows a compositional bias: polar residues; that stretch reads TLSSSKNLKPSSETKTQKG. Short sequence motifs (LFa) lie at residues 537–548, 572–583, and 617–629; these read LFSDEEDSEDLF, LFDDEDEEDNLF, and LFSS…WNIP. S539 is modified (phosphoserine). Disordered regions lie at residues 621 to 664, 696 to 739, and 751 to 838; these read DEED…KTSL, DSGG…QLGV, and ESLK…KSTG. Over residues 637–647 the composition is skewed to basic and acidic residues; that stretch reads SDSRSKGEPRD. 3 short sequence motifs (LFa) span residues 664–674, 690–702, and 726–738; these read LFEEDEEDDLF, LFED…GSLF, and LFSD…AQLG. Over residues 751 to 768 the composition is skewed to basic and acidic residues; it reads ESLKFGRTDVAESEKEGL. The LFa 11 motif lies at 803–817; sequence LFDEEEDKMEDQNII. The span at 823-834 shows a compositional bias: basic and acidic residues; that stretch reads EVGKGRDPDAHP. 3 consecutive short sequence motifs (LFa) follow at residues 839 to 847, 856 to 862, and 878 to 888; these read VFQDEELLF, DPDVDLF, and LFGDDEDDDLF. Disordered stretches follow at residues 881–951 and 988–1205; these read DDED…KEPS and FPSS…LEDE. 2 stretches are compositionally biased toward basic and acidic residues: residues 898-911 and 917-931; these read QEKK…HSVD and KHPE…KGIW. An interaction with phospholipids region spans residues 937–1341; the sequence is QDSSGLAPFK…DDPLNAFGGQ (405 aa). Positions 1028–1046 are enriched in basic residues; the sequence is NKSRVKMRGKRRPQTRAAR. The interval 1029–1047 is required for interaction with F-actin-capping protein subunit alpha (CAPZA1 or CAPZA2 or CAPZA3); that stretch reads KSRVKMRGKRRPQTRAARR. Residues S1054 and S1087 each carry the phosphoserine modification. Low complexity predominate over residues 1094 to 1110; sequence EALAAAAAPWEGGPVPG. S1114 bears the Phosphoserine mark. Short sequence motifs (LFa) lie at residues 1129–1136, 1171–1185, 1201–1209, 1234–1240, 1262–1270, and 1290–1299; these read LFDSGDIF, MFPA…DDLF, LLEDEDDLF, IFEDDIF, LFDDNIDIF, and IFDDDMDDIF. Residues 1135–1145 show a composition bias toward polar residues; it reads IFSTGTGSQSV. The segment at 1302–1326 is disordered; the sequence is GIQAKTTKPKSRSAQAAPEPRFEHK. The short motif at 1330–1338 is the LFa 21 element; that stretch reads IFDDPLNAF.

It belongs to the FAM21 family. In terms of assembly, component of the WASH core complex also described as WASH regulatory complex (SHRC) composed of WASH (WASHC1, WASH2P or WASH3P), WASHC2 (WASHC2A or WASHC2C), WASHC3, WASHC4 and WASHC5; in the complex interacts (via N-terminus) directly with WASHC1. The WASH core complex associates with the F-actin-capping protein dimer (formed by CAPZA1, CAPZA2 or CAPZA3 and CAPZB) in a transient or substoichiometric manner which was initially described as WASH complex. Interacts with VPS35; mediates the association with the retromer CSC complex. Interacts with FKBP15. Interacts with CCDC93, CCDC22, VPS35L; indicative for an association of the WASH core complex with the CCC and retriever complexes. Directly interacts with TBC1D23.

Its subcellular location is the early endosome membrane. The protein resides in the cell membrane. Its function is as follows. Acts at least in part as component of the WASH core complex whose assembly at the surface of endosomes inhibits WASH nucleation-promoting factor (NPF) activity in recruiting and activating the Arp2/3 complex to induce actin polymerization and is involved in the fission of tubules that serve as transport intermediates during endosome sorting. Mediates the recruitment of the WASH core complex to endosome membranes via binding to phospholipids and VPS35 of the retromer CSC. Mediates the recruitment of the F-actin-capping protein dimer to the WASH core complex probably promoting localized F-actin polymerization needed for vesicle scission. Via its C-terminus binds various phospholipids, most strongly phosphatidylinositol 4-phosphate (PtdIns-(4)P), phosphatidylinositol 5-phosphate (PtdIns-(5)P) and phosphatidylinositol 3,5-bisphosphate (PtdIns-(3,5)P2). Involved in the endosome-to-plasma membrane trafficking and recycling of SNX27-retromer-dependent cargo proteins, such as GLUT1. Required for the association of DNAJC13, ENTR1, ANKRD50 with retromer CSC subunit VPS35. Required for the endosomal recruitment of CCC complex subunits COMMD1 and CCDC93 as well as the retriever complex subunit VPS35L. The sequence is that of WASH complex subunit 2A from Homo sapiens (Human).